We begin with the raw amino-acid sequence, 85 residues long: CRISPR-associated endoribonuclease Cas2 (85 aa).

Position 8 (Asp-8) interacts with Mg(2+).

Belongs to the CRISPR-associated endoribonuclease Cas2 protein family. As to quaternary structure, homodimer, forms a heterotetramer with a Cas1 homodimer. Mg(2+) is required as a cofactor.

In terms of biological role, CRISPR (clustered regularly interspaced short palindromic repeat), is an adaptive immune system that provides protection against mobile genetic elements (viruses, transposable elements and conjugative plasmids). CRISPR clusters contain sequences complementary to antecedent mobile elements and target invading nucleic acids. CRISPR clusters are transcribed and processed into CRISPR RNA (crRNA). Functions as a ssRNA-specific endoribonuclease. Involved in the integration of spacer DNA into the CRISPR cassette. The polypeptide is CRISPR-associated endoribonuclease Cas2 (Pyrococcus furiosus (strain ATCC 43587 / DSM 3638 / JCM 8422 / Vc1)).